Consider the following 148-residue polypeptide: SsrA-binding protein (148 aa).

The tract at residues 119–148 is disordered; the sequence is AKGKKQHDKRQSMKEADWKREKQRLIKHTR. Basic and acidic residues predominate over residues 127 to 142; that stretch reads KRQSMKEADWKREKQR.

This sequence belongs to the SmpB family.

The protein resides in the cytoplasm. In terms of biological role, required for rescue of stalled ribosomes mediated by trans-translation. Binds to transfer-messenger RNA (tmRNA), required for stable association of tmRNA with ribosomes. tmRNA and SmpB together mimic tRNA shape, replacing the anticodon stem-loop with SmpB. tmRNA is encoded by the ssrA gene; the 2 termini fold to resemble tRNA(Ala) and it encodes a 'tag peptide', a short internal open reading frame. During trans-translation Ala-aminoacylated tmRNA acts like a tRNA, entering the A-site of stalled ribosomes, displacing the stalled mRNA. The ribosome then switches to translate the ORF on the tmRNA; the nascent peptide is terminated with the 'tag peptide' encoded by the tmRNA and targeted for degradation. The ribosome is freed to recommence translation, which seems to be the essential function of trans-translation. This chain is SsrA-binding protein, found in Neisseria meningitidis serogroup C (strain 053442).